The sequence spans 428 residues: Serine--tRNA ligase (428 aa).

235–237 (TAE) contributes to the L-serine binding site. 266 to 268 (RSE) is an ATP binding site. Glu-289 provides a ligand contact to L-serine. 353–356 (EISS) is a binding site for ATP. An L-serine-binding site is contributed by Ser-389.

It belongs to the class-II aminoacyl-tRNA synthetase family. Type-1 seryl-tRNA synthetase subfamily. In terms of assembly, homodimer. The tRNA molecule binds across the dimer.

It localises to the cytoplasm. It carries out the reaction tRNA(Ser) + L-serine + ATP = L-seryl-tRNA(Ser) + AMP + diphosphate + H(+). The catalysed reaction is tRNA(Sec) + L-serine + ATP = L-seryl-tRNA(Sec) + AMP + diphosphate + H(+). Its pathway is aminoacyl-tRNA biosynthesis; selenocysteinyl-tRNA(Sec) biosynthesis; L-seryl-tRNA(Sec) from L-serine and tRNA(Sec): step 1/1. Catalyzes the attachment of serine to tRNA(Ser). Is also able to aminoacylate tRNA(Sec) with serine, to form the misacylated tRNA L-seryl-tRNA(Sec), which will be further converted into selenocysteinyl-tRNA(Sec). This is Serine--tRNA ligase from Shewanella baltica (strain OS185).